Here is a 561-residue protein sequence, read N- to C-terminus: Cytochrome P450 monooxygenase iboC (561 aa).

Residues 8 to 28 (RFYYQLLAAVLIPALFVAWAA) form a helical membrane-spanning segment. Residue cysteine 484 participates in heme binding.

Belongs to the cytochrome P450 family. Requires heme as cofactor.

It localises to the membrane. Its pathway is secondary metabolite biosynthesis. Cytochrome P450 monooxygenase; part of the gene cluster that mediates the biosynthesis of the psychoactive metabolites ibotenic acid and muscimol. The first committed step is glutamate hydroxylation by the 2-oxoglutarate-dependent dioxygenase iboH, and the last step is decarboxylation of ibotenic acid to muscimol by the decarboxylase iboD. The order of the intermediate reactions is somewhat ambiguous. IboA likely activates the carboxylic acid at position 5 to introduce an amide bond, and the flavin monooxygenase iboF generates the N-O bond. There are several options for the latter step. One option is that iboF directly hydroxylates the amide nitrogen formed by iboA to produce a hydroxamic acid species. Another option is that iboF hydroxylates an external N-containing compound, whose resulting N-O bond is subsequently introduced into the hydroxyglutamate scaffold. The paralogous PLP-dependent cystathionine gamma-synthase-like enzymes iboG1 and iboG2 are likely involved in substitution of the OH group at position 3 by the O-N moiety. The first cyclic intermediate is most probably tricholomic acid which is likely desaturated to ibotenic acid by the cytochrome P450 monooxygenase iboC. The chain is Cytochrome P450 monooxygenase iboC from Amanita muscaria (strain Koide BX008).